The chain runs to 408 residues: MQTQRVPGRKRGRPPLHSTRVQMAVHNLYSASAASVPAVTIPKKRGRKPRYKIKSPVLMTPLALSPPRSTPEPDLSSIPQDAATIPSLVVPEALTVCLYINKQADVGPYLERRKLQQLPERLGPERPATVLQQAVQACIDCAHQPRLVFSLVKQGYRGELVSVSASFDGKQHLRSLPVVNSVGYVLRFLTKLCRSLLCDNLFSHLPFPGSIGASDKAQEREDGRTESAKVATAEECLANAVGMNRYAMDFSHRGSVTHSSSLYKRLTCGDSHLAGGPATTTSGSRTNPVPSGGSSSPGLRLPASSPKRNGTAIEGNRCAPSPSPEVQDTRRPSSRNPSTWTVEDVVRFVKDADPEALGPHVELFRKHEIDGNALLLLRSDMIMKYLGLKLGPALKLCYHIDKLKQAKF.

A phosphoserine mark is found at Ser-55 and Ser-65. Residues Ala-274–Ser-338 are disordered. Polar residues predominate over residues Ala-278–Asn-287. The segment covering Pro-288 to Pro-306 has biased composition (low complexity). An SAM domain is found at Trp-340–Ala-406.

This sequence belongs to the SCM family.

Its subcellular location is the nucleus. Functionally, putative Polycomb group (PcG) protein. PcG proteins act by forming multiprotein complexes, which are required to maintain the transcriptionally repressive state of homeotic genes throughout development. The protein is Sex comb on midleg-like protein 4 (Scml4) of Mus musculus (Mouse).